A 225-amino-acid chain; its full sequence is Endonuclease V (225 aa).

Positions 43 and 110 each coordinate Mg(2+).

It belongs to the endonuclease V family. It depends on Mg(2+) as a cofactor.

It is found in the cytoplasm. It carries out the reaction Endonucleolytic cleavage at apurinic or apyrimidinic sites to products with a 5'-phosphate.. In terms of biological role, DNA repair enzyme involved in the repair of deaminated bases. Selectively cleaves double-stranded DNA at the second phosphodiester bond 3' to a deoxyinosine leaving behind the intact lesion on the nicked DNA. The chain is Endonuclease V from Thermotoga neapolitana (strain ATCC 49049 / DSM 4359 / NBRC 107923 / NS-E).